We begin with the raw amino-acid sequence, 508 residues long: Lysine--tRNA ligase (508 aa).

Residues glutamate 416 and glutamate 423 each coordinate Mg(2+).

This sequence belongs to the class-II aminoacyl-tRNA synthetase family. Homodimer. It depends on Mg(2+) as a cofactor.

The protein resides in the cytoplasm. The enzyme catalyses tRNA(Lys) + L-lysine + ATP = L-lysyl-tRNA(Lys) + AMP + diphosphate. The polypeptide is Lysine--tRNA ligase (Prochlorococcus marinus (strain MIT 9313)).